Consider the following 600-residue polypeptide: Proton channel OTOP1 (600 aa).

Residues 1-50 are disordered; the sequence is MPGDRGALSSPAASSGSPSAAPSGIAACPPPPSPLARASPQASGPRRGAS. At 1–56 the chain is on the cytoplasmic side; sequence MPGDRGALSSPAASSGSPSAAPSGIAACPPPPSPLARASPQASGPRRGASVPQKLA. A compositionally biased stretch (low complexity) spans 7–27; that stretch reads ALSSPAASSGSPSAAPSGIAA. Residues 57–78 traverse the membrane as a helical segment; that stretch reads ETLSSQYGLNVFVAGLLFLLAW. Residues 79 to 86 lie on the Extracellular side of the membrane; the sequence is AVHATGVG. A helical membrane pass occupies residues 87–110; sequence KSDLLCVLTALMLLQLLWMLWYVG. At 111–128 the chain is on the cytoplasmic side; that stretch reads RSYMQRRLIRPKDTHAGA. The chain crosses the membrane as a helical span at residues 129–151; sequence RWLRGSITLFAFITIVLGCLKVA. At 152–161 the chain is on the extracellular side; the sequence is YFIGFSECLS. The helical transmembrane segment at 162-186 threads the bilayer; that stretch reads ATEGVFPVTHAVHTLLQVYFLWGHA. Residues 187–194 lie on the Cytoplasmic side of the membrane; that stretch reads KDIIMSFK. The chain crosses the membrane as a helical span at residues 195–221; it reads TLERFGVIHSVFTNLLLWANSVLNESK. At 222-262 the chain is on the extracellular side; sequence HQLNEHKERLITLGFGNITIVLDDHTPQCNCTPPALCSALS. A helical transmembrane segment spans residues 263-288; it reads HGIYYLYPFNIEYQILASTMLYVLWK. Residues 289–309 are Cytoplasmic-facing; it reads NIGRRVDSSRHQKMQCRFDGV. A helical transmembrane segment spans residues 310–332; the sequence is LVGSVLGLTVLAATIAVVVVYMI. Residues 333-342 lie on the Extracellular side of the membrane; that stretch reads HIGRSKSKSE. A helical transmembrane segment spans residues 343–368; it reads SALIMFYLYAITVLLLMGAAGLVGSW. At 369–386 the chain is on the cytoplasmic side; the sequence is IYRVDEKSLDESKNPARK. A helical membrane pass occupies residues 387–411; that stretch reads LDADLLVATASGSWLLSWGSILAIA. Residues 412–421 are Extracellular-facing; the sequence is CAETRPPYTW. Residues 422-442 traverse the membrane as a helical segment; sequence YNLPYSVLVIVEKYVQNIFII. The Cytoplasmic portion of the chain corresponds to 443–532; the sequence is ESVHLEPEGV…QGGMKRRLLR (90 aa). Residues 533 to 551 form a helical membrane-spanning segment; the sequence is NITAFLFLCNISLWIPPAF. The Extracellular segment spans residues 552 to 569; that stretch reads GCRPEYDNGLEEIVFGFE. The helical transmembrane segment at 570-593 threads the bilayer; the sequence is PWIIVVNLAMPFSIFYRMHAAAAL. Topologically, residues 594 to 600 are cytoplasmic; the sequence is FEVYCKI.

This sequence belongs to the otopetrin family. As to quaternary structure, homodimer. Interacts with STAT1, independently of STAT1 phosphorylation status.

It is found in the cell membrane. Its subcellular location is the cell projection. The protein resides in the microvillus. It catalyses the reaction H(+)(in) = H(+)(out). Activated by both acid and alkali, with proton influx in response to extracellular acid and proton efflux during alkali stimulation. Inhibited by Zn(2+); this inhibition is thought to be pH-sensitive. Currents evoked in response to mild acid (pH 6.0) stimulus may also be mildly potentiated by exposure to Zn(2+). Activated by NH(4)Cl. Its function is as follows. Proton-selective ion channel. Biphasically modulated by acid and alkali, mediating proton influx and efflux in response to extracellular acid and base stimulation, respectively. Sour taste receptor, which carries inward currents in response to extracellular acidification. Sensor for ammonium chloride (NH(4)Cl) in taste receptor cells. NH(4)Cl acts by increasing the intracellular pH, thereby generating a driving force for proton entry through OTOP1 channel. Might also participate in alkaline sensation. Plays a role in the regulation of Ca(2+) flux in response to purigenic (ATP, ADP and UDP) stimuli, leading to increase in cytosolic Ca(2+) due to influx of extracellular calcium. May play this role by inhibiting P2Y purinoceptor-mediated Ca(2+) release in a Ca(2+)-dependent manner and promote an influx of Ca(2+) in response to ATP. Through this mechanism and possibly others, plays a role in the formation and function of calcium carbonate-based structures in the vestibular system of the inner ear, called otoconia, that sense gravity and linear acceleration. In obesity, may attenuate adipose tissue inflammation, through the negative regulation of IFNG signaling, hence may play an adaptive role in the maintainance of metabolic homeostasis. Following alkali activation, may also be permeable Na(+), K(+), Cs(+) and Li(+). The chain is Proton channel OTOP1 from Rattus norvegicus (Rat).